The chain runs to 392 residues: Glutamine synthetase (392 aa).

Residues 26–106 (VQVTYVWIDG…VMCEVLKYNR (81 aa)) form the GS beta-grasp domain. In terms of domain architecture, GS catalytic spans 113 to 392 (LRHTCKKIME…MASPRDAAVF (280 aa)). Glu-134 contributes to the ATP binding site. Mn(2+) is bound by residues Glu-134, Glu-136, Glu-196, and Glu-203. Residue 203–208 (EFQVGP) coordinates ATP. 246–247 (NW) serves as a coordination point for L-glutamate. A Mn(2+)-binding site is contributed by His-253. Residues 255 to 257 (NYS), Arg-319, and Arg-324 contribute to the ATP site. Arg-319 lines the L-glutamate pocket. 336–338 (YFE) contributes to the ADP binding site. Position 338 (Glu-338) interacts with Mn(2+). Residue Arg-340 coordinates L-glutamate.

It belongs to the glutamine synthetase family. Mg(2+) is required as a cofactor. Mn(2+) serves as cofactor.

The protein resides in the cytoplasm. Its subcellular location is the cytosol. It is found in the microsome. It localises to the mitochondrion. The enzyme catalyses L-glutamate + NH4(+) + ATP = L-glutamine + ADP + phosphate + H(+). Glutamine synthetase that catalyzes the ATP-dependent conversion of glutamate and ammonia to glutamine. The polypeptide is Glutamine synthetase (Xenopus laevis (African clawed frog)).